The chain runs to 168 residues: SPbeta prophage-derived uncharacterized protein YonX (168 aa).

The stretch at 1–53 forms a coiled coil; that stretch reads MNAQLFNLESRLDELENEINTQYCELDTNLDALKSNRIELESQLEKFESSLTN.

The polypeptide is SPbeta prophage-derived uncharacterized protein YonX (yonX) (Bacillus subtilis (strain 168)).